The following is a 445-amino-acid chain: Trigger factor (445 aa).

Residues 162 to 247 enclose the PPIase FKBP-type domain; that stretch reads GDQVTIDAIG…IKAVHTAEPT (86 aa).

It belongs to the FKBP-type PPIase family. Tig subfamily.

The protein localises to the cytoplasm. The catalysed reaction is [protein]-peptidylproline (omega=180) = [protein]-peptidylproline (omega=0). Involved in protein export. Acts as a chaperone by maintaining the newly synthesized protein in an open conformation. Functions as a peptidyl-prolyl cis-trans isomerase. This chain is Trigger factor, found in Rickettsia peacockii (strain Rustic).